The primary structure comprises 1673 residues: NBPF family member NBPF26 (1673 aa).

EGF-like domains lie at 24–63, 64–102, 105–143, and 144–180; these read HALQ…EYCQ, HRDP…EDCQ, TPHP…KECQ, and WTDA…QKCE. Disulfide bonds link Cys-28–Cys-41, Cys-35–Cys-51, Cys-53–Cys-62, Cys-68–Cys-79, Cys-73–Cys-90, Cys-92–Cys-101, Cys-109–Cys-121, Cys-115–Cys-131, Cys-133–Cys-142, Cys-148–Cys-159, Cys-153–Cys-168, Cys-170–Cys-179, Cys-186–Cys-198, Cys-192–Cys-207, Cys-209–Cys-218, Cys-225–Cys-236, and Cys-230–Cys-246. Positions 182-219 constitute an EGF-like 5; calcium-binding domain; that stretch reads DVNECDIPGHCQHGGTCLNLPGSYQCQCLQGFTGQYCD. An EGF-like 6 domain is found at 221-258; sequence LYVPCAHSPCVNGGTCRQTGDFTFECNCLPVPDSTSSA. The stretch at 337–381 forms a coiled coil; the sequence is RQFKEEKLAEQLKQAEELRQYKVLVHSQERELTQLKEKLREGRDA. Disordered stretches follow at residues 423–463, 713–734, and 782–828; these read KLSP…KVPE, EKVQ…EVPE, and WEDA…EGYS. Residues 427 to 443 show a composition bias toward acidic residues; that stretch reads ENDEDEDEDVQVEEDEK. 13 Olduvai domains span residues 427–521, 698–790, 791–879, 882–937, 938–1029, 1032–1104, 1107–1162, 1163–1255, 1256–1348, 1351–1423, 1426–1481, 1482–1574, and 1575–1673; these read ENDE…NILP, ENDN…HIIP, ENES…ATGP, SREL…VDMD, EIEK…PSCP, SGEL…PSCP, SREL…LDVD, RIKK…RSKK, ERRR…PSCP, SREL…PSCP, and ERRR…IFPQ. Residues 452-463 show a composition bias toward basic and acidic residues; it reads EVQKTEESKVPE. Acidic residues-rich tracts occupy residues 792 to 801 and 812 to 824; these read NESDDEEEEE and ESEE…ESWD. The tract at residues 1242-1280 is disordered; it reads KGKGKKRRGRRSKKERRRGRKEGEEDQNPPCPRLSRELL. Over residues 1243–1261 the composition is skewed to basic residues; sequence GKGKKRRGRRSKKERRRGR. A disordered region spans residues 1561-1594; it reads KGKGKKRRGRRSKKERRRGRKEGEEDQNPPCPRL. Over residues 1562–1580 the composition is skewed to basic residues; sequence GKGKKRRGRRSKKERRRGR.

The protein belongs to the NBPF family.

The protein localises to the cytoplasm. The chain is NBPF family member NBPF26 from Homo sapiens (Human).